The sequence spans 351 residues: Ceramide hydroxylase (351 aa).

The next 4 helical transmembrane spans lie at 26-46, 47-67, 141-161, and 204-224; these read AAIY…GFLI, AATT…MLAL, GFLF…AILI, and VACW…VVPV.

Belongs to the fatty acid desaturase type 1 family.

It is found in the cell inner membrane. The protein operates within lipid metabolism; sphingolipid metabolism. In terms of biological role, involved in de novo bacterial ceramide synthesis. The polypeptide is Ceramide hydroxylase (Caulobacter vibrioides (strain NA1000 / CB15N) (Caulobacter crescentus)).